The primary structure comprises 466 residues: uncharacterized protein (466 aa).

The segment at 1–22 (MKKNNERVNTNPSLISKSYNMK) is disordered. The span at 7–19 (RVNTNPSLISKSY) shows a compositional bias: polar residues. Ser40 and Ser42 each carry phosphoserine. An RRM domain is found at 108–183 (YFVHMDNISP…RLISATITNH (76 aa)). Residues 186-207 (RLPNAEHLESSTKTKDESQDKD) form a disordered region. Positions 188-207 (PNAEHLESSTKTKDESQDKD) are enriched in basic and acidic residues. Positions 209 to 368 (LTKLDRAKLE…RAWRNFSGNT (160 aa)) constitute a CID domain. Ser371 carries the phosphoserine modification. Positions 425–436 (STETSSSSSPQP) are enriched in low complexity. Residues 425–448 (STETSSSSSPQPTEERKAKFKPSF) are disordered.

The protein localises to the nucleus. It localises to the cytoplasm. This is an uncharacterized protein from Schizosaccharomyces pombe (strain 972 / ATCC 24843) (Fission yeast).